A 424-amino-acid chain; its full sequence is Phosphomethylpyrimidine synthase (424 aa).

Residues N66, M95, Y124, H163, 185-187 (SRG), 226-229 (DGMR), and E265 each bind substrate. H269 contacts Zn(2+). F292 lines the substrate pocket. Position 333 (H333) interacts with Zn(2+). 3 residues coordinate [4Fe-4S] cluster: C408, C411, and C415.

It belongs to the ThiC family. It depends on [4Fe-4S] cluster as a cofactor.

It catalyses the reaction 5-amino-1-(5-phospho-beta-D-ribosyl)imidazole + S-adenosyl-L-methionine = 4-amino-2-methyl-5-(phosphooxymethyl)pyrimidine + CO + 5'-deoxyadenosine + formate + L-methionine + 3 H(+). The protein operates within cofactor biosynthesis; thiamine diphosphate biosynthesis. Functionally, catalyzes the synthesis of the hydroxymethylpyrimidine phosphate (HMP-P) moiety of thiamine from aminoimidazole ribotide (AIR) in a radical S-adenosyl-L-methionine (SAM)-dependent reaction. The protein is Phosphomethylpyrimidine synthase of Thermotoga neapolitana (strain ATCC 49049 / DSM 4359 / NBRC 107923 / NS-E).